A 127-amino-acid polypeptide reads, in one-letter code: Histone H2B type 1-A (127 aa).

Residues 1 to 32 are disordered; it reads MPEVSAKGTTISKKGFKKAVTKTQKKEGRKRK. P2 carries the post-translational modification N-acetylproline. N6-acetyllysine; alternate occurs at positions 7, 13, 14, 17, 18, 22, and 25. Residues K7, K13, K14, K17, K18, K22, K25, and K36 each carry the N6-crotonyllysine; alternate modification. N6-lactoyllysine; alternate is present on residues K7 and K13. K7 is covalently cross-linked (Glycyl lysine isopeptide (Lys-Gly) (interchain with G-Cter in SUMO2); alternate). N6-lactoyllysine; alternate occurs at positions 17, 18, 22, and 25. K22 is covalently cross-linked (Glycyl lysine isopeptide (Lys-Gly) (interchain with G-Cter in SUMO2); alternate). K36 carries the N6-succinyllysine; alternate modification. A Glycyl lysine isopeptide (Lys-Gly) (interchain with G-Cter in ubiquitin); alternate cross-link involves residue K36. S38 bears the Phosphoserine mark. The residue at position 45 (K45) is an N6-lactoyllysine; alternate. At K48 the chain carries N6-methyllysine. K59 carries the post-translational modification N6,N6-dimethyllysine. R81 bears the Dimethylated arginine mark. An N6-acetyllysine; alternate modification is found at K87. K87 is subject to N6-lactoyllysine; alternate. An N6,N6,N6-trimethyllysine; alternate modification is found at K87. R88 and R94 each carry omega-N-methylarginine. The residue at position 110 (K110) is an N6-lactoyllysine; alternate. Position 110 is an N6-methyllysine (K110). T117 bears the Phosphothreonine mark. An N6-lactoyllysine; alternate mark is found at K118 and K122. An N6-succinyllysine; alternate mark is found at K118 and K122. K118 carries the N6-methylated lysine; alternate modification. A Glycyl lysine isopeptide (Lys-Gly) (interchain with G-Cter in ubiquitin); alternate cross-link involves residue K122.

This sequence belongs to the histone H2B family. In terms of assembly, the nucleosome is a histone octamer containing two molecules each of H2A, H2B, H3 and H4 assembled in one H3-H4 heterotetramer and two H2A-H2B heterodimers. In terms of processing, monoubiquitination at Lys-36 by the MSL1/MSL2 dimer is required for histone H3 'Lys-4' (H3K4me) and 'Lys-79' (H3K79me) methylation and transcription activation at specific gene loci, such as HOXA9 and MEIS1 loci. Similarly, monoubiquitination of Lys-122 (H2BK120Ub) by the RNF20/40 complex gives a specific tag for epigenetic transcriptional activation and is also prerequisite for histone H3 'Lys-4' and 'Lys-79' methylation. It also functions cooperatively with the FACT dimer to stimulate elongation by RNA polymerase II. H2BK120Ub also acts as a regulator of mRNA splicing: deubiquitination by USP49 is required for efficient cotranscriptional splicing of a large set of exons. Crotonylation (Kcr) is specifically present in male germ cells and marks testis-specific genes in post-meiotic cells, including X-linked genes that escape sex chromosome inactivation in haploid cells. Crotonylation marks active promoters and enhancers and confers resistance to transcriptional repressors. It is also associated with post-meiotically activated genes on autosomes. Post-translationally, acetylated during spermatogenesis. Acetylated form is most abundant in spermatogonia compared to spermatocytes and round spermatids. In terms of processing, phosphorylated at Thr-117 in spermatogonia, spermatocytes and round spermatids. Methylated at Lys-118 in spermatogonia, spermatocytes and round spermatids. Post-translationally, lactylated in macrophages by EP300/P300 by using lactoyl-CoA directly derived from endogenous or exogenous lactate, leading to stimulates gene transcription. Testis. Expressed in pachytene spermatocytes during meiotic prophase I in the absence of any significant DNA synthesis.

It localises to the nucleus. Its subcellular location is the chromosome. Functionally, variant histone specifically required to direct the transformation of dissociating nucleosomes to protamine in male germ cells. Entirely replaces classical histone H2B prior nucleosome to protamine transition and probably acts as a nucleosome dissociating factor that creates a more dynamic chromatin, facilitating the large-scale exchange of histones. Core component of nucleosome. Nucleosomes wrap and compact DNA into chromatin, limiting DNA accessibility to the cellular machineries which require DNA as a template. Histones thereby play a central role in transcription regulation, DNA repair, DNA replication and chromosomal stability. DNA accessibility is regulated via a complex set of post-translational modifications of histones, also called histone code, and nucleosome remodeling. In Rattus norvegicus (Rat), this protein is Histone H2B type 1-A.